The chain runs to 259 residues: 3-deoxy-manno-octulosonate cytidylyltransferase (259 aa).

The protein belongs to the KdsB family.

The protein resides in the cytoplasm. The enzyme catalyses 3-deoxy-alpha-D-manno-oct-2-ulosonate + CTP = CMP-3-deoxy-beta-D-manno-octulosonate + diphosphate. It functions in the pathway nucleotide-sugar biosynthesis; CMP-3-deoxy-D-manno-octulosonate biosynthesis; CMP-3-deoxy-D-manno-octulosonate from 3-deoxy-D-manno-octulosonate and CTP: step 1/1. Its pathway is bacterial outer membrane biogenesis; lipopolysaccharide biosynthesis. Functionally, activates KDO (a required 8-carbon sugar) for incorporation into bacterial lipopolysaccharide in Gram-negative bacteria. The chain is 3-deoxy-manno-octulosonate cytidylyltransferase from Nitrosococcus oceani (strain ATCC 19707 / BCRC 17464 / JCM 30415 / NCIMB 11848 / C-107).